Here is a 134-residue protein sequence, read N- to C-terminus: Small ribosomal subunit protein uS11 (134 aa).

Residues 114 to 134 are disordered; that stretch reads SISDVTPQPHNGCRPPKRRRV.

This sequence belongs to the universal ribosomal protein uS11 family. In terms of assembly, part of the 30S ribosomal subunit. Interacts with proteins S7 and S18. Binds to IF-3.

Functionally, located on the platform of the 30S subunit, it bridges several disparate RNA helices of the 16S rRNA. Forms part of the Shine-Dalgarno cleft in the 70S ribosome. The polypeptide is Small ribosomal subunit protein uS11 (Corynebacterium efficiens (strain DSM 44549 / YS-314 / AJ 12310 / JCM 11189 / NBRC 100395)).